The chain runs to 126 residues: Large ribosomal subunit protein uL14 (126 aa).

The protein belongs to the universal ribosomal protein uL14 family. Part of the 50S ribosomal subunit. Forms a cluster with proteins L3 and L19. In the 70S ribosome, L14 and L19 interact and together make contacts with the 16S rRNA in bridges B5 and B8.

Binds to 23S rRNA. Forms part of two intersubunit bridges in the 70S ribosome. The protein is Large ribosomal subunit protein uL14 of Persephonella marina (strain DSM 14350 / EX-H1).